Reading from the N-terminus, the 494-residue chain is Cobyric acid synthase (494 aa).

One can recognise a GATase cobBQ-type domain in the interval 254–453 (KQTVAVIAYP…LHGLFEDPGA (200 aa)). C338 serves as the catalytic Nucleophile. H445 is an active-site residue.

The protein belongs to the CobB/CobQ family. CobQ subfamily.

It participates in cofactor biosynthesis; adenosylcobalamin biosynthesis. Functionally, catalyzes amidations at positions B, D, E, and G on adenosylcobyrinic A,C-diamide. NH(2) groups are provided by glutamine, and one molecule of ATP is hydrogenolyzed for each amidation. The protein is Cobyric acid synthase of Albidiferax ferrireducens (strain ATCC BAA-621 / DSM 15236 / T118) (Rhodoferax ferrireducens).